The chain runs to 155 residues: Ubiquitin-conjugating enzyme E2 14 (155 aa).

The 148-residue stretch at 7–154 (SSSRRLTKEY…ARDYVEQFAK (148 aa)) folds into the UBC core domain. Catalysis depends on cysteine 91, which acts as the Glycyl thioester intermediate.

Belongs to the ubiquitin-conjugating enzyme family.

It catalyses the reaction S-ubiquitinyl-[E1 ubiquitin-activating enzyme]-L-cysteine + [E2 ubiquitin-conjugating enzyme]-L-cysteine = [E1 ubiquitin-activating enzyme]-L-cysteine + S-ubiquitinyl-[E2 ubiquitin-conjugating enzyme]-L-cysteine.. The protein operates within protein modification; protein ubiquitination. Functionally, catalyzes the covalent attachment of ubiquitin to other proteins. Mediates the selective degradation of short-lived and abnormal proteins. This chain is Ubiquitin-conjugating enzyme E2 14 (ubc14), found in Schizosaccharomyces pombe (strain 972 / ATCC 24843) (Fission yeast).